Here is a 187-residue protein sequence, read N- to C-terminus: Phosphatidylethanolamine-binding protein 1 (187 aa).

Residue Ser13 is modified to Phosphoserine. Thr42 is modified (phosphothreonine). 3 positions are modified to phosphoserine: Ser52, Ser98, and Ser153. The interval 93–134 (KGNDISSGTVLSDYVGSGPPKGTGLHRYVWLVYEQSGPLKCD) is interaction with RAF1.

It belongs to the phosphatidylethanolamine-binding protein family. As to quaternary structure, has a tendency to form dimers by disulfide cross-linking. Interacts with RAF1 and this interaction is enhanced if RAF1 is phosphorylated on residues 'Ser-338', 'Ser-339', 'Tyr-340' and 'Tyr-341'. Interacts with ALOX15; in response to IL13/interleukin-13, prevents the interaction of PEBP1 with RAF1 to activate the ERK signaling cascade.

It localises to the cytoplasm. Functionally, binds ATP, opioids and phosphatidylethanolamine. Has lower affinity for phosphatidylinositol and phosphatidylcholine. Serine protease inhibitor which inhibits thrombin, neuropsin and chymotrypsin but not trypsin, tissue type plasminogen activator and elastase. Involved in the positive regulation of epithelial cell migration. Inhibits the kinase activity of RAF1 by inhibiting its activation and by dissociating the RAF1/MEK complex and acting as a competitive inhibitor of MEK phosphorylation. Its function is as follows. HCNP may be involved in the function of the presynaptic cholinergic neurons of the central nervous system. HCNP increases the production of choline acetyltransferase but not acetylcholinesterase. Seems to be mediated by a specific receptor. The polypeptide is Phosphatidylethanolamine-binding protein 1 (PEBP1) (Canis lupus familiaris (Dog)).